Reading from the N-terminus, the 1071-residue chain is ATP-dependent helicase/deoxyribonuclease subunit B (1071 aa).

Belongs to the helicase family. AddB/RexB type 2 subfamily. As to quaternary structure, heterodimer of AddA and RexB. Mg(2+) is required as a cofactor.

The heterodimer acts as both an ATP-dependent DNA helicase and an ATP-dependent, dual-direction single-stranded exonuclease. Recognizes the chi site generating a DNA molecule suitable for the initiation of homologous recombination. This subunit has 5' -&gt; 3' nuclease activity but not helicase activity. This chain is ATP-dependent helicase/deoxyribonuclease subunit B, found in Streptococcus pyogenes serotype M3 (strain ATCC BAA-595 / MGAS315).